A 1038-amino-acid chain; its full sequence is Translation initiation factor IF-2 (1038 aa).

Disordered stretches follow at residues 39–346 (TISE…KWQE) and 403–451 (KPKA…PEKV). Residues 103 to 125 (RNTTSNAPEASVANNQIASSEAN) are compositionally biased toward polar residues. The segment covering 157–176 (PQKPAAPEAEPEAQSQAPAK) has biased composition (low complexity). 2 stretches are compositionally biased toward basic and acidic residues: residues 178–197 (AVEK…ERQP) and 226–243 (PILK…DQAK). The segment covering 407–423 (ARAATAATAAPISSPTT) has biased composition (low complexity). Residues 431 to 450 (NNRDQNRRQETEVKRERPEK) are compositionally biased toward basic and acidic residues. One can recognise a tr-type G domain in the interval 532-705 (RRPPVVTIMG…LLVAEVGELS (174 aa)). Residues 541 to 548 (GHVDHGKT) are G1. 541–548 (GHVDHGKT) contacts GTP. Residues 566–570 (GITQH) are G2. The G3 stretch occupies residues 591 to 594 (DTPG). GTP-binding positions include 591–595 (DTPGH) and 645–648 (NKID). The G4 stretch occupies residues 645–648 (NKID). Residues 681 to 683 (SAI) are G5.

The protein belongs to the TRAFAC class translation factor GTPase superfamily. Classic translation factor GTPase family. IF-2 subfamily.

Its subcellular location is the cytoplasm. Functionally, one of the essential components for the initiation of protein synthesis. Protects formylmethionyl-tRNA from spontaneous hydrolysis and promotes its binding to the 30S ribosomal subunits. Also involved in the hydrolysis of GTP during the formation of the 70S ribosomal complex. The sequence is that of Translation initiation factor IF-2 from Trichormus variabilis (strain ATCC 29413 / PCC 7937) (Anabaena variabilis).